We begin with the raw amino-acid sequence, 128 residues long: MSEGGGQVSCIFAAPTRLCRWPALIECGVNLTQPLCEWMIQVARDRTLSLAWEVASLLTLSSSEVGLEGVGTIWPSSYSSEESSRNGAEQGRQLSIEGPFQGQNCPSHPAAALPLPMRGESQATSCQV.

The disordered stretch occupies residues 77–128 (SYSSEESSRNGAEQGRQLSIEGPFQGQNCPSHPAAALPLPMRGESQATSCQV).

As to quaternary structure, interacts with PRDX6. Highest expression in placenta, muscle, fetal brain, and adult brain, with lower expression in heart, kidney, stomach, testis, and adrenal gland. In the central nervous system, highest expression is in temporal lobe, hypothalamus, medulla and spinal cord, with lower expression in other brain regions.

The protein localises to the cytoplasm. Its subcellular location is the nucleus. The sequence is that of Saitohin (STH) from Homo sapiens (Human).